Consider the following 289-residue polypeptide: Serine/threonine-protein phosphatase Pgam5, mitochondrial (289 aa).

This sequence belongs to the phosphoglycerate mutase family. BPG-dependent PGAM subfamily. As to quaternary structure, interacts with Pk92B/ASK1.

It localises to the mitochondrion outer membrane. The enzyme catalyses O-phospho-L-seryl-[protein] + H2O = L-seryl-[protein] + phosphate. The catalysed reaction is O-phospho-L-threonyl-[protein] + H2O = L-threonyl-[protein] + phosphate. Its function is as follows. Displays phosphatase activity for serine/threonine residues, and dephosphorylates and activates Pk92B kinase. Has apparently no phosphoglycerate mutase activity. In Drosophila mojavensis (Fruit fly), this protein is Serine/threonine-protein phosphatase Pgam5, mitochondrial.